The following is a 371-amino-acid chain: ATP-dependent protease ATP-binding subunit-like protein AmiB (371 aa).

96 to 103 (GPTGVGKT) contributes to the ATP binding site.

This sequence belongs to the ClpX chaperone family. Mg(2+) serves as cofactor.

Unlikely to encode a regulatory protein. Has ATPase activity. AmiB and AmiS may act jointly into a two component ABC transporter system. This chain is ATP-dependent protease ATP-binding subunit-like protein AmiB (amiB), found in Pseudomonas aeruginosa (strain ATCC 15692 / DSM 22644 / CIP 104116 / JCM 14847 / LMG 12228 / 1C / PRS 101 / PAO1).